The sequence spans 240 residues: Fatty acid metabolism regulator protein (240 aa).

The HTH gntR-type domain maps to 6–74 (KGPASFAEKY…HGKPTRVNNF (69 aa)). The segment at residues 34 to 53 (ERELSELIGVTRTTLREVLQ) is a DNA-binding region (H-T-H motif).

As to quaternary structure, homodimer.

The protein resides in the cytoplasm. In terms of biological role, multifunctional regulator of fatty acid metabolism. The polypeptide is Fatty acid metabolism regulator protein (Shewanella oneidensis (strain ATCC 700550 / JCM 31522 / CIP 106686 / LMG 19005 / NCIMB 14063 / MR-1)).